The primary structure comprises 199 residues: Chromophore lyase CpcT/CpeT 2 (199 aa).

The protein belongs to the CpcT/CpeT biliprotein lyase family.

In terms of biological role, covalently attaches a chromophore to Cys residue(s) of phycobiliproteins. The sequence is that of Chromophore lyase CpcT/CpeT 2 from Synechococcus sp. (strain JA-3-3Ab) (Cyanobacteria bacterium Yellowstone A-Prime).